The sequence spans 498 residues: Delta(14)-sterol reductase erg24A (498 aa).

Helical transmembrane passes span 30 to 50 (LGAF…TFLC), 91 to 111 (VTVW…FLPG), 136 to 156 (ILIL…FVVW), and 163 to 183 (YVQI…FVYA). N-linked (GlcNAc...) asparagine glycosylation is present at N257. The next 3 membrane-spanning stretches (helical) occupy residues 275-295 (IVLS…MEPA), 302-322 (VIMD…VPFI), and 339-359 (LREI…FRGA). Residues K363, R367, W395, and 402-403 (NY) each bind NADP(+). N429 is a glycosylation site (N-linked (GlcNAc...) asparagine). The helical transmembrane segment at 444 to 464 (VRGWGMIFTYFFLVYFGALLI) threads the bilayer. NADP(+) is bound by residues D470, 474 to 478 (CKSKY), and Y485.

It belongs to the ERG4/ERG24 family.

The protein localises to the endoplasmic reticulum membrane. Its pathway is steroid metabolism; ergosterol biosynthesis. Delta(14)-sterol reductase; part of the third module of ergosterol biosynthesis pathway that includes the late steps of the pathway. Catalyzes the reduction of the C14=C15 double bond within 4,4,24-trimethyl ergosta-8,14,24(28)-trienolto produce 4,4-dimethylfecosterol. The third module or late pathway involves the ergosterol synthesis itself through consecutive reactions that mainly occur in the endoplasmic reticulum (ER) membrane. Firstly, the squalene synthase erg9 catalyzes the condensation of 2 farnesyl pyrophosphate moieties to form squalene, which is the precursor of all steroids. Squalene synthase is crucial for balancing the incorporation of farnesyl diphosphate (FPP) into sterol and nonsterol isoprene synthesis. Secondly, squalene is converted into lanosterol by the consecutive action of the squalene epoxidase erg1 and the lanosterol synthase erg7. Then, the delta(24)-sterol C-methyltransferase erg6 methylates lanosterol at C-24 to produce eburicol. Eburicol is the substrate of the sterol 14-alpha demethylase encoded by cyp51A and cyp51B, to yield 4,4,24-trimethyl ergosta-8,14,24(28)-trienol. The C-14 reductase erg24 then reduces the C14=C15 double bond which leads to 4,4-dimethylfecosterol. A sequence of further demethylations at C-4, involving the C-4 demethylation complex containing the C-4 methylsterol oxidases erg25A or erg25B, the sterol-4-alpha-carboxylate 3-dehydrogenase erg26 and the 3-keto-steroid reductase erg27, leads to the production of fecosterol via 4-methylfecosterol. The C-8 sterol isomerase erg2 then catalyzes the reaction which results in unsaturation at C-7 in the B ring of sterols and thus converts fecosterol to episterol. The sterol-C5-desaturase erg3B then catalyzes the introduction of a C-5 double bond in the B ring to produce 5-dehydroepisterol. The 2 other sterol-C5-desaturases, erg3A and erg3C, seem to be less important in ergosterol biosynthesis. The C-22 sterol desaturase erg5 further converts 5-dehydroepisterol into ergosta-5,7,22,24(28)-tetraen-3beta-ol by forming the C-22(23) double bond in the sterol side chain. Finally, ergosta-5,7,22,24(28)-tetraen-3beta-ol is substrate of the C-24(28) sterol reductases erg4A and erg4B to produce ergosterol. Possible alternative sterol biosynthetic pathways might exist from fecosterol to ergosterol, depending on the activities of the erg3 isoforms. The sequence is that of Delta(14)-sterol reductase erg24A from Aspergillus fumigatus (strain ATCC MYA-4609 / CBS 101355 / FGSC A1100 / Af293) (Neosartorya fumigata).